The chain runs to 537 residues: uncharacterized protein (537 aa).

The segment at 10-56 is disordered; it reads HHDVEPQNVEEEPPLTGQTIVTEDKLETSAKDKKHESPSMSEDEEGS. A compositionally biased stretch (basic and acidic residues) spans 31-46; that stretch reads TEDKLETSAKDKKHES. The next 12 membrane-spanning stretches (helical) occupy residues 90–110, 133–153, 156–176, 180–200, 213–233, 243–263, 313–333, 348–368, 393–413, 422–442, 457–477, and 492–512; these read FVAT…TACI, LFIV…DIFG, WVYV…ALAY, MMAI…ANVA, GFGI…GSPI, WFYW…VLCP, PIIM…FLYL, YMGA…VVML, FLIS…FAFT, SPLI…LAMI, IAAF…LGII, and AFIS…GHLI.

The protein belongs to the major facilitator superfamily. CAR1 family.

Its subcellular location is the endoplasmic reticulum. It localises to the golgi apparatus. The protein resides in the membrane. This is an uncharacterized protein from Schizosaccharomyces pombe (strain 972 / ATCC 24843) (Fission yeast).